Here is a 477-residue protein sequence, read N- to C-terminus: Argininosuccinate lyase (477 aa).

Over residues 1 to 18 (MTTSSHSSEQPTSTQTSG) the composition is skewed to polar residues. Residues 1–21 (MTTSSHSSEQPTSTQTSGMWG) form a disordered region.

This sequence belongs to the lyase 1 family. Argininosuccinate lyase subfamily.

Its subcellular location is the cytoplasm. It catalyses the reaction 2-(N(omega)-L-arginino)succinate = fumarate + L-arginine. Its pathway is amino-acid biosynthesis; L-arginine biosynthesis; L-arginine from L-ornithine and carbamoyl phosphate: step 3/3. This Acinetobacter baylyi (strain ATCC 33305 / BD413 / ADP1) protein is Argininosuccinate lyase.